A 335-amino-acid chain; its full sequence is MIIAVDGMGGDFAPELVVEGCIQAVKEYEGIHIIITGKKELIKNELDKREYNGNKIEILNAEEVISTNEAPVKAIRRKKDSSMVKALELVKEGKAQAVISAGSTGALMAGATFVLGRIKGINRVCLAPLLPGAKAPFMIADAGANVDCKAEYLVQFAMMGKVYFESVLGVKSPTVGLVNIGAEEEKGNELTKAAYKLLKDTDFNFIGNIEPRDIPRGEVNIAVCDGFIGNTVLKTYEGVASNLFSMLKKEIMASTRGKIGGALLKPVFKDFKKKFDYTEYGGSPFLGAKGICIKAHGSSDAKAFKNAIRQAKICYDKKIIEEIENNLGNLIENNI.

Belongs to the PlsX family. Homodimer. Probably interacts with PlsY.

It is found in the cytoplasm. The catalysed reaction is a fatty acyl-[ACP] + phosphate = an acyl phosphate + holo-[ACP]. It functions in the pathway lipid metabolism; phospholipid metabolism. Catalyzes the reversible formation of acyl-phosphate (acyl-PO(4)) from acyl-[acyl-carrier-protein] (acyl-ACP). This enzyme utilizes acyl-ACP as fatty acyl donor, but not acyl-CoA. In Clostridium botulinum (strain ATCC 19397 / Type A), this protein is Phosphate acyltransferase.